A 724-amino-acid chain; its full sequence is Probable dipeptidyl-peptidase 5 (724 aa).

The signal sequence occupies residues 1–19; it reads MGALTWLSVVAAAASTALA. Residues N76, N97, N154, N257, N383, and N453 are each glycosylated (N-linked (GlcNAc...) asparagine). S563 serves as the catalytic Charge relay system. N610 is a glycosylation site (N-linked (GlcNAc...) asparagine). Residues D646 and H678 each act as charge relay system in the active site.

It belongs to the peptidase S9C family.

The protein localises to the secreted. In terms of biological role, extracellular dipeptidyl-peptidase which removes N-terminal dipeptides sequentially from polypeptides having unsubstituted N-termini. The sequence is that of Probable dipeptidyl-peptidase 5 (dpp5) from Aspergillus clavatus (strain ATCC 1007 / CBS 513.65 / DSM 816 / NCTC 3887 / NRRL 1 / QM 1276 / 107).